The primary structure comprises 115 residues: Putative HNH nuclease YajD (115 aa).

An HNH domain is found at 27–75; it reads CGRCSREFVYSNLRELTVHHIDHDHTNNPEDGSNWELLCLYCHDHEHSK.

This sequence belongs to the HNH nuclease family.

The polypeptide is Putative HNH nuclease YajD (yajD) (Salmonella typhi).